The chain runs to 51 residues: U-Asilidin(1)-Mar1a (51 aa).

Residues 1-23 form the signal peptide; the sequence is MANYIEVFSVLAIIFATVLAALA. 3 cysteine pairs are disulfide-bonded: cysteine 26/cysteine 40, cysteine 33/cysteine 44, and cysteine 39/cysteine 49.

Belongs to the asilidin-1 family. Expressed by the venom gland. Is the most highly expressed peptide and is around 3000 times higher expressed in the thoracic glands compared to its body tissues.

It localises to the secreted. Induces neurotoxic effect on honeybees, including slow movements, disorientation and paralysis. Since it provokes similar symptoms than omega-atracotoxin, it is probable that it acts in the same way by inhibiting voltage-gated calcium channels. This Machimus arthriticus (Breck robberfly) protein is U-Asilidin(1)-Mar1a.